Here is a 148-residue protein sequence, read N- to C-terminus: Large ribosomal subunit protein uL15B (148 aa).

2 stretches are compositionally biased toward basic residues: residues 1-13 (MPTHTSKTRKLRG) and 21-31 (RIGKHRKHPGG). Residues 1–38 (MPTHTSKTRKLRGHVSAGHGRIGKHRKHPGGRGKAGGL) form a disordered region. The residue at position 108 (Tyr-108) is a Phosphotyrosine.

This sequence belongs to the universal ribosomal protein uL15 family. As to quaternary structure, component of the large ribosomal subunit (LSU). Mature yeast ribosomes consist of a small (40S) and a large (60S) subunit. The 40S small subunit contains 1 molecule of ribosomal RNA (18S rRNA) and at least 33 different proteins. The large 60S subunit contains 3 rRNA molecules (25S, 5.8S and 5S rRNA) and at least 46 different proteins.

It localises to the cytoplasm. The protein localises to the nucleus. It is found in the nucleolus. In terms of biological role, component of the ribosome, a large ribonucleoprotein complex responsible for the synthesis of proteins in the cell. The small ribosomal subunit (SSU) binds messenger RNAs (mRNAs) and translates the encoded message by selecting cognate aminoacyl-transfer RNA (tRNA) molecules. The large subunit (LSU) contains the ribosomal catalytic site termed the peptidyl transferase center (PTC), which catalyzes the formation of peptide bonds, thereby polymerizing the amino acids delivered by tRNAs into a polypeptide chain. The nascent polypeptides leave the ribosome through a tunnel in the LSU and interact with protein factors that function in enzymatic processing, targeting, and the membrane insertion of nascent chains at the exit of the ribosomal tunnel. In Schizosaccharomyces pombe (strain 972 / ATCC 24843) (Fission yeast), this protein is Large ribosomal subunit protein uL15B (rpl2801).